Consider the following 521-residue polypeptide: MDYRRLRMPDFDAIPRRDYLMAVLSGVLLALSFPSPGISPLAWIAFAPLLLACGRKDPRKAFRLGFVTGLAAYAGILYWITIVVTTYGKLPWIVSVGVLSMLVSYLALYPAVVAYLVRRGEERGISLLISFPLLWVGLEYGRAFLVTGFPWASLGYTQYRTLPLIQIADITGVYGLSFLIALANVVLFRIIRGFAAREPAPYPVKSVVLLLVLLLVTIAYGFKRLHVPEGGAPFKVALIQGNIDQNIKWDPSFQEETVAIYERLSRKACAAGPSDLLVWPESAAPFYFQDEPRYASRIKGLARELKTCAVVGSPAFEKDGERLKYLNSAFLLSPWGDVIGRSDKIHLVPFGEYVPMAKLLPFVNKLVAGIGDFSPGAQIAALDTGKGRIGILVCFEGIFPELSRAYVRAGSRLLVNITNDAWFGRSSAPYQHISMTVFRAVENRVPLVRAANTGITSIIDSRGHIRGMTPLFQEAVLNGEVRLGEGESFYNRYGDVFAWACVAGAAVVAALAFRRKSIHHQ.

6 consecutive transmembrane segments (helical) span residues Val27–Ala47, Leu64–Val84, Ile93–Val113, Ile125–Leu145, Ile167–Leu187, and Tyr202–Phe222. One can recognise a CN hydrolase domain in the interval Ile239–Leu483. The Proton acceptor role is filled by Glu281. Residue Lys344 is part of the active site. Cys394 functions as the Nucleophile in the catalytic mechanism. Residues Tyr493–Phe513 traverse the membrane as a helical segment.

The protein belongs to the CN hydrolase family. Apolipoprotein N-acyltransferase subfamily.

Its subcellular location is the cell inner membrane. The catalysed reaction is N-terminal S-1,2-diacyl-sn-glyceryl-L-cysteinyl-[lipoprotein] + a glycerophospholipid = N-acyl-S-1,2-diacyl-sn-glyceryl-L-cysteinyl-[lipoprotein] + a 2-acyl-sn-glycero-3-phospholipid + H(+). It participates in protein modification; lipoprotein biosynthesis (N-acyl transfer). Catalyzes the phospholipid dependent N-acylation of the N-terminal cysteine of apolipoprotein, the last step in lipoprotein maturation. The chain is Apolipoprotein N-acyltransferase from Geobacter metallireducens (strain ATCC 53774 / DSM 7210 / GS-15).